The primary structure comprises 185 residues: Peptidyl-tRNA hydrolase (185 aa).

Tyr-14 provides a ligand contact to tRNA. His-19 (proton acceptor) is an active-site residue. TRNA is bound by residues Tyr-65, Asn-67, and Asn-113.

The protein belongs to the PTH family. In terms of assembly, monomer.

The protein localises to the cytoplasm. The catalysed reaction is an N-acyl-L-alpha-aminoacyl-tRNA + H2O = an N-acyl-L-amino acid + a tRNA + H(+). Its function is as follows. Hydrolyzes ribosome-free peptidyl-tRNAs (with 1 or more amino acids incorporated), which drop off the ribosome during protein synthesis, or as a result of ribosome stalling. In terms of biological role, catalyzes the release of premature peptidyl moieties from peptidyl-tRNA molecules trapped in stalled 50S ribosomal subunits, and thus maintains levels of free tRNAs and 50S ribosomes. The protein is Peptidyl-tRNA hydrolase of Rickettsia rickettsii (strain Iowa).